Reading from the N-terminus, the 418-residue chain is Histidinol dehydrogenase (418 aa).

Tyr-119, Gln-180, and Asn-203 together coordinate NAD(+). Substrate is bound by residues Thr-226, Gln-248, and His-251. Zn(2+) contacts are provided by Gln-248 and His-251. Residues Glu-316 and His-317 each act as proton acceptor in the active site. Positions 317, 350, 404, and 409 each coordinate substrate. Position 350 (Asp-350) interacts with Zn(2+). Zn(2+) is bound at residue His-409.

Belongs to the histidinol dehydrogenase family. Requires Zn(2+) as cofactor.

The enzyme catalyses L-histidinol + 2 NAD(+) + H2O = L-histidine + 2 NADH + 3 H(+). Its pathway is amino-acid biosynthesis; L-histidine biosynthesis; L-histidine from 5-phospho-alpha-D-ribose 1-diphosphate: step 9/9. Functionally, catalyzes the sequential NAD-dependent oxidations of L-histidinol to L-histidinaldehyde and then to L-histidine. The sequence is that of Histidinol dehydrogenase from Staphylococcus aureus (strain COL).